We begin with the raw amino-acid sequence, 316 residues long: Retron Ec73 reverse transcriptase (316 aa).

A Reverse transcriptase domain is found at 1-243 (MRIYSLIDSQ…GSIVVTGLKV (243 aa)). The Mg(2+) site is built by Asp-99, Asp-189, and Asp-190. The segment at 247-316 (FHITLHRSMK…WIQNLHNKVE (70 aa)) is necessary and required for recognition and binding of RNA.

Belongs to the bacterial reverse transcriptase family.

The catalysed reaction is DNA(n) + a 2'-deoxyribonucleoside 5'-triphosphate = DNA(n+1) + diphosphate. Reverse transcriptase (RT) component of antiviral defense system retron Ec73, composed of a non-coding RNA (ncRNA) followed by a ribosyltransferase/DNA-binding protein then a reverse transcriptase (RT). Expression of this retron confers protection against bacteriophages SECphi4, SECphi6, SECphi27 and P1. At multiplicity of infection (MOI) of 0.02 cultures grow normally when infected with SECphi4 without collapsing, at MOI 2 cultures enter growth stasis. Responsible for synthesis of msDNA-Ec73 (a branched molecule with RNA linked by a 2',5'-phosphodiester bond to ssDNA). The retron transcript serves as primer (from a conserved internal G residue) and template for the reaction, and codes for the RT. Recognizes only its cognate RNA as a primer template. The protein is Retron Ec73 reverse transcriptase of Escherichia coli.